Reading from the N-terminus, the 231-residue chain is UPF0173 metal-dependent hydrolase AF_1265 (231 aa).

The protein belongs to the UPF0173 family.

The sequence is that of UPF0173 metal-dependent hydrolase AF_1265 from Archaeoglobus fulgidus (strain ATCC 49558 / DSM 4304 / JCM 9628 / NBRC 100126 / VC-16).